The sequence spans 231 residues: Ribosomal RNA small subunit methyltransferase G (231 aa).

S-adenosyl-L-methionine contacts are provided by residues Gly-75, 125–126, and Arg-140; that span reads GE. Positions 204-213 are enriched in acidic residues; the sequence is AEAEEGDSPE. Residues 204 to 231 form a disordered region; that stretch reads AEAEEGDSPEAADASRGVILELTKKNKG.

It belongs to the methyltransferase superfamily. RNA methyltransferase RsmG family.

Its subcellular location is the cytoplasm. Functionally, specifically methylates the N7 position of a guanine in 16S rRNA. The chain is Ribosomal RNA small subunit methyltransferase G from Rhodopirellula baltica (strain DSM 10527 / NCIMB 13988 / SH1).